The chain runs to 468 residues: Tissue alpha-L-fucosidase (468 aa).

A signal peptide spans 1-29 (MRAPGERWRPAGAALWLLLLLLLLGATES). Thr172 carries the post-translational modification Phosphothreonine. Asn243, Asn270, and Asn384 each carry an N-linked (GlcNAc...) asparagine glycan.

Belongs to the glycosyl hydrolase 29 family. Homotetramer.

The protein localises to the lysosome. The enzyme catalyses an alpha-L-fucoside + H2O = L-fucose + an alcohol. It carries out the reaction a neolactoside IV(2)-alpha-Fuc-nLc4Cer(d18:1(4E)) + H2O = a neolactoside nLc4Cer(d18:1(4E)) + L-fucose. The catalysed reaction is a neolactoside IV(2)-alpha-Fuc-nLc4Cer(d18:0) + H2O = a neolactoside nLc4Cer(d18:0) + L-fucose. Functionally, alpha-L-fucosidase is responsible for hydrolyzing the alpha-1,6-linked fucose joined to the reducing-end N-acetylglucosamine of the carbohydrate moieties of glycoproteins. The polypeptide is Tissue alpha-L-fucosidase (FUCA1) (Macaca fascicularis (Crab-eating macaque)).